An 81-amino-acid polypeptide reads, in one-letter code: Conotoxin Eb11.3 (81 aa).

The signal sequence occupies residues 1–23; it reads MMFRLTSVWCLLVIVLLNSAVDG. 4 cysteine pairs are disulfide-bonded: Cys27/Cys41, Cys34/Cys48, Cys40/Cys56, and Cys47/Cys62. Leu69 carries the post-translational modification Leucine amide. Positions 73 to 81 are excised as a propeptide; it reads AQYKRFFRR.

This sequence belongs to the conotoxin I2 superfamily. As to expression, expressed by the venom duct.

The protein resides in the secreted. In Conus eburneus (Ivory cone), this protein is Conotoxin Eb11.3.